Reading from the N-terminus, the 515-residue chain is MSDAFSTPADHALSHPELEAILENAQAGPSSIGDGAEGMSIEEAFEVDETVRRVLEGDYKTIGLQFPDELLPSSVSVYRAIQTRIAHTGAQAYVLADSTYGNCCPDVLSCLHLPADFLVHYGHACLTPTDALPVHYVFPRQKLDVKQAVESLLAASKNELDGDGRKGIVVVWDVSYDWLANDIRDTFSQDSTIQISFASIQKPTLASQKGLKDVKGKTPALRSVEPPQGLEMNDCVLWYIGEEGRSCMNLQMTHANNPLFIYSPSSQSVSPLHRTTSRLLSRRLFALHQALSADVFGLIVSNIGLASSKPLLAQLREDLKRAKKKSYTLSVGRLNPAKLANFAEIECFVLVGCAEGGVVDSKDFLRPIITPWELELALQGPDHVWAPENWTLDLGTVLKDAQEREIKIKQDSSTADSDDDSLEFSLITGTMRTKKRFAFGNGTHTLENNKLLGDGGVQDLTLRNQNFSLSKLESAGSTFLASREFQGLEPRYGMDEPSVLEQGRSGVARGYTEEK.

[4Fe-4S] cluster is bound by residues Cys104, Cys125, and Cys353. Positions Gly493–Lys515 are disordered.

This sequence belongs to the DPH1/DPH2 family. DPH2 subfamily. As to quaternary structure, component of the 2-(3-amino-3-carboxypropyl)histidine synthase complex composed of DPH1, DPH2, DPH3 and a NADH-dependent reductase, predominantly CBR1. Requires [4Fe-4S] cluster as cofactor.

The protein resides in the cytoplasm. The protein operates within protein modification; peptidyl-diphthamide biosynthesis. In terms of biological role, required for the first step of diphthamide biosynthesis, a post-translational modification of histidine which occurs in elongation factor 2. DPH1 and DPH2 transfer a 3-amino-3-carboxypropyl (ACP) group from S-adenosyl-L-methionine (SAM) to a histidine residue, the reaction is assisted by a reduction system comprising DPH3 and a NADH-dependent reductase, predominantly CBR1. Facilitates the reduction of the catalytic iron-sulfur cluster found in the DPH1 subunit. This is 2-(3-amino-3-carboxypropyl)histidine synthase subunit 2 (DPH2) from Cryptococcus neoformans var. neoformans serotype D (strain B-3501A) (Filobasidiella neoformans).